A 184-amino-acid polypeptide reads, in one-letter code: Probable RNA 2'-phosphotransferase (184 aa).

It belongs to the KptA/TPT1 family.

Removes the 2'-phosphate from RNA via an intermediate in which the phosphate is ADP-ribosylated by NAD followed by a presumed transesterification to release the RNA and generate ADP-ribose 1''-2''-cyclic phosphate (APPR&gt;P). May function as an ADP-ribosylase. The polypeptide is Probable RNA 2'-phosphotransferase (Escherichia coli O6:K15:H31 (strain 536 / UPEC)).